The sequence spans 152 residues: UPF0179 protein Mlab_1307 (152 aa).

It belongs to the UPF0179 family.

This Methanocorpusculum labreanum (strain ATCC 43576 / DSM 4855 / Z) protein is UPF0179 protein Mlab_1307.